The primary structure comprises 490 residues: Betaine aldehyde dehydrogenase (490 aa).

T26, I27, and D93 together coordinate K(+). G150–W152 contacts NAD(+). K162 functions as the Charge relay system in the catalytic mechanism. Residue K176–E179 participates in NAD(+) binding. V180 serves as a coordination point for K(+). Position 230-233 (G230–S233) interacts with NAD(+). Residue L246 participates in K(+) binding. Residue E252 is the Proton acceptor of the active site. The NAD(+) site is built by G254, C286, and E387. The Nucleophile role is filled by C286. C286 carries the cysteine sulfenic acid (-SOH) modification. Residues K457 and G460 each coordinate K(+). The active-site Charge relay system is the E464.

Belongs to the aldehyde dehydrogenase family. As to quaternary structure, dimer of dimers. It depends on K(+) as a cofactor.

It catalyses the reaction betaine aldehyde + NAD(+) + H2O = glycine betaine + NADH + 2 H(+). It participates in amine and polyamine biosynthesis; betaine biosynthesis via choline pathway; betaine from betaine aldehyde: step 1/1. In terms of biological role, involved in the biosynthesis of the osmoprotectant glycine betaine. Catalyzes the irreversible oxidation of betaine aldehyde to the corresponding acid. The protein is Betaine aldehyde dehydrogenase of Escherichia coli (strain K12 / DH10B).